Consider the following 226-residue polypeptide: ATP synthase F(0) complex subunit a (226 aa).

5 helical membrane passes run 9-29, 68-88, 97-117, 138-158, and 184-204; these read FITPMMLGLPLVTLIILFPSL, WTLMLMSLILFIGSTNLLGLL, QLSMNLGMAIPLWAGAVITGF, IPMLVIIETISLFIQPMALAV, and ISPTTALITFIILILLTILEF.

Belongs to the ATPase A chain family. As to quaternary structure, component of the ATP synthase complex composed at least of ATP5F1A/subunit alpha, ATP5F1B/subunit beta, ATP5MC1/subunit c (homooctomer), MT-ATP6/subunit a, MT-ATP8/subunit 8, ATP5ME/subunit e, ATP5MF/subunit f, ATP5MG/subunit g, ATP5MK/subunit k, ATP5MJ/subunit j, ATP5F1C/subunit gamma, ATP5F1D/subunit delta, ATP5F1E/subunit epsilon, ATP5PF/subunit F6, ATP5PB/subunit b, ATP5PD/subunit d, ATP5PO/subunit OSCP. ATP synthase complex consists of a soluble F(1) head domain (subunits alpha(3) and beta(3)) - the catalytic core - and a membrane F(0) domain - the membrane proton channel (subunits c, a, 8, e, f, g, k and j). These two domains are linked by a central stalk (subunits gamma, delta, and epsilon) rotating inside the F1 region and a stationary peripheral stalk (subunits F6, b, d, and OSCP). Interacts with DNAJC30; interaction is direct.

The protein resides in the mitochondrion inner membrane. It catalyses the reaction H(+)(in) = H(+)(out). In terms of biological role, subunit a, of the mitochondrial membrane ATP synthase complex (F(1)F(0) ATP synthase or Complex V) that produces ATP from ADP in the presence of a proton gradient across the membrane which is generated by electron transport complexes of the respiratory chain. ATP synthase complex consist of a soluble F(1) head domain - the catalytic core - and a membrane F(1) domain - the membrane proton channel. These two domains are linked by a central stalk rotating inside the F(1) region and a stationary peripheral stalk. During catalysis, ATP synthesis in the catalytic domain of F(1) is coupled via a rotary mechanism of the central stalk subunits to proton translocation. With the subunit c (ATP5MC1), forms the proton-conducting channel in the F(0) domain, that contains two crucial half-channels (inlet and outlet) that facilitate proton movement from the mitochondrial intermembrane space (IMS) into the matrix. Protons are taken up via the inlet half-channel and released through the outlet half-channel, following a Grotthuss mechanism. The protein is ATP synthase F(0) complex subunit a of Capra hircus (Goat).